The chain runs to 464 residues: MAVYNYDVVVLGSGPAGEGAAMNAAKAGRKVAMVDSRRQVGGNCTHLGTIPSKALRHSVRQIMQFNTNPMFRAIGEPRWFSFPDVLKSAEKVISKQVASRTGYYARNRVDLFFGTGSFADEQTVEVVCANGVVEKLVAKHIIIATGSRPYRPADIDFHHPRIYDSDTILSLGHTPRKLIIYGAGVIGCEYASIFSGLGVLVELVDNRDQLLSFLDSEISQALSYHFSNNNITVRHNEEYERVEGLDNGVILHLKSGKKIKADALLWCNGRTGNTDKLGMENIGVKVNSRGQIEVDENYRTCVTNIYGAGDVIGWPSLASAAHDQGRSAAGSIVDNGSWRYVNDVPTGIYTIPEISSIGKNEHELTKAKVPYEVGKAFFKSMARAQIAGEPQGMLKILFHRETLEVLGVHCFGYQASEIVHIGQAIMSQPGEQNTLKYFVNTTFNYPTMAEAYRVAAYDGLNRLF.

35–44 is an FAD binding site; that stretch reads DSRRQVGGNC.

Belongs to the class-I pyridine nucleotide-disulfide oxidoreductase family. Requires FAD as cofactor.

The protein localises to the cytoplasm. It catalyses the reaction NAD(+) + NADPH = NADH + NADP(+). In terms of biological role, conversion of NADPH, generated by peripheral catabolic pathways, to NADH, which can enter the respiratory chain for energy generation. This is Soluble pyridine nucleotide transhydrogenase from Pseudomonas fluorescens (strain SBW25).